Reading from the N-terminus, the 181-residue chain is Mating-type M-specific polypeptide Mc (181 aa).

The segment at residues 103-171 is a DNA-binding region (HMG box); sequence TPRPPNAFIL…QHQKMYPGYK (69 aa).

It localises to the nucleus. Mating type proteins are sequence specific DNA-binding proteins that act as master switches in yeast differentiation by controlling gene expression in a cell type-specific fashion. Positive regulator of MFM genes. The HMG box recognizes the DNA sequence 5'-AACAAAG-3'. Required for conjugation and efficient meiosis. This chain is Mating-type M-specific polypeptide Mc (matMc), found in Schizosaccharomyces kambucha (Fission yeast).